Here is a 202-residue protein sequence, read N- to C-terminus: Cutinase (202 aa).

The first 20 residues, M1–A20, serve as a signal peptide directing secretion. C31 and C106 are disulfide-bonded. S117 acts as the Nucleophile in catalysis. The cysteines at positions 165 and 172 are disulfide-linked. D169 is an active-site residue. H182 acts as the Proton donor/acceptor in catalysis.

The protein belongs to the cutinase family. The 2 disulfide bonds play a critical role in holding the catalytic residues in juxta-position; reduction of the disulfide bridges results in the complete inactivation of the enzyme.

The protein resides in the secreted. The catalysed reaction is cutin + H2O = cutin monomers.. Catalyzes the hydrolysis of complex carboxylic polyesters found in the cell wall of plants. Degrades cutin, a macromolecule that forms the structure of the plant cuticle. Allows pathogenic fungi to penetrate through the cuticular barrier into the host plant during the initial stage of fungal infection. In Botryotinia fuckeliana (Noble rot fungus), this protein is Cutinase.